The sequence spans 202 residues: Holliday junction branch migration complex subunit RuvA (202 aa).

A domain I region spans residues M1–A64. Positions S65–A143 are domain II. The tract at residues L144 to P154 is flexible linker. Residues P154–I202 are domain III.

It belongs to the RuvA family. Homotetramer. Forms an RuvA(8)-RuvB(12)-Holliday junction (HJ) complex. HJ DNA is sandwiched between 2 RuvA tetramers; dsDNA enters through RuvA and exits via RuvB. An RuvB hexamer assembles on each DNA strand where it exits the tetramer. Each RuvB hexamer is contacted by two RuvA subunits (via domain III) on 2 adjacent RuvB subunits; this complex drives branch migration. In the full resolvosome a probable DNA-RuvA(4)-RuvB(12)-RuvC(2) complex forms which resolves the HJ.

Its subcellular location is the cytoplasm. In terms of biological role, the RuvA-RuvB-RuvC complex processes Holliday junction (HJ) DNA during genetic recombination and DNA repair, while the RuvA-RuvB complex plays an important role in the rescue of blocked DNA replication forks via replication fork reversal (RFR). RuvA specifically binds to HJ cruciform DNA, conferring on it an open structure. The RuvB hexamer acts as an ATP-dependent pump, pulling dsDNA into and through the RuvAB complex. HJ branch migration allows RuvC to scan DNA until it finds its consensus sequence, where it cleaves and resolves the cruciform DNA. In Pseudomonas fluorescens (strain ATCC BAA-477 / NRRL B-23932 / Pf-5), this protein is Holliday junction branch migration complex subunit RuvA.